We begin with the raw amino-acid sequence, 187 residues long: MNETQIQRETRQVVEDVLEKTNLKQGALFVLGLSSSEVLGGQIGKESSQEIGELIVETILGILSSRGIHLAVQGCEHVNRALVVERQVAEQFGLEIVSVHPTLHAGGSGQLAAFKFMQDPVEVEFIKAHAGLDIGDTAIGMHVKHVQVPIRPILREIGHAHVTALASRPKLIGGARAHYPQDAIRKS.

The protein belongs to the UPF0340 family.

This Streptococcus pneumoniae (strain 70585) protein is UPF0340 protein SP70585_0722.